The primary structure comprises 518 residues: Organic cation/carnitine transporter 3 (518 aa).

The disordered stretch occupies residues 1-23 (MADSTRPLLSDFNSSESNLPPPR). The Cytoplasmic portion of the chain corresponds to 1-32 (MADSTRPLLSDFNSSESNLPPPRSLEETIERC). The helical transmembrane segment at 33–53 (IGDFGWAQFLQAALVSFAWFF) threads the bilayer. Residues 54–122 (DAQQTFITVF…LQCAGSFLKG (69 aa)) are Extracellular-facing. Asn83 and Asn94 each carry an N-linked (GlcNAc...) asparagine glycan. Residues 123–143 (FPASSFFLGCLIGGLALSTLA) traverse the membrane as a helical segment. At 144–157 (DSSLGRKNMLLLSC) the chain is on the cytoplasmic side. Residues 158–178 (LIMSLSSMLTAFSTSIWVYAF) traverse the membrane as a helical segment. Residues 179–180 (LR) lie on the Extracellular side of the membrane. A helical transmembrane segment spans residues 181–197 (FLNGCGRATIGTCALVL). An ATP-binding site is contributed by 198–205 (STELVGKK). Residues 198 to 210 (STELVGKKWRGQV) lie on the Cytoplasmic side of the membrane. The helical transmembrane segment at 211 to 231 (GAMGFFCFTLGFLSLPMLGYI) threads the bilayer. Residues 232-239 (NEGNSWRN) are Extracellular-facing. The chain crosses the membrane as a helical span at residues 240–259 (LYVWTSIPTLIYCCLVRSFV). Residues 260–325 (RESPRWLIVK…LVRKSWSFRR (66 aa)) lie on the Cytoplasmic side of the membrane. Residues 326–346 (LLAAMVVGFGIGMVYYGMPLA) form a helical membrane-spanning segment. Topologically, residues 347–355 (LTNLNFNLY) are extracellular. A helical transmembrane segment spans residues 356 to 376 (LGVVFNALSEFPAFLITFFFI). Topologically, residues 377 to 383 (DKINRRD) are cytoplasmic. Residues 384–404 (ALIGFTALSGISSALIAVLGQ) traverse the membrane as a helical segment. The Extracellular segment spans residues 405-410 (QLGSLQ). Residues 411–431 (IVLELVSFFSACTAFNMTLIY) form a helical membrane-spanning segment. The Cytoplasmic segment spans residues 432-443 (TIEMFPTCVRNS). Residues 444 to 464 (AISMVRQALVFGGVFSPVMVA) form a helical membrane-spanning segment. At 465–470 (AGRENQ) the chain is on the extracellular side. The helical transmembrane segment at 471 to 491 (FWSYGLFGLIIGLCGLFVFGL) threads the bilayer. Residues 492–518 (PETRGSVLCDTMDEEEYKTLAKRQFIG) lie on the Cytoplasmic side of the membrane.

It belongs to the major facilitator (TC 2.A.1) superfamily. Organic cation transporter (TC 2.A.1.19) family. In terms of tissue distribution, mostly expressed in siliques, mainly in young seeds. Present in stems (cortical cells and parenchyma cells), at the basis of secondary inflorescences, and at the base of trichomes.

The protein resides in the vacuole membrane. In terms of biological role, high affinity carnitine transporter involved in the active cellular uptake of carnitine. Also transports organic cations. This Arabidopsis thaliana (Mouse-ear cress) protein is Organic cation/carnitine transporter 3 (OCT3).